Here is a 161-residue protein sequence, read N- to C-terminus: Cell division protein SepF (161 aa).

Belongs to the SepF family. Homodimer. Interacts with FtsZ.

Its subcellular location is the cytoplasm. Cell division protein that is part of the divisome complex and is recruited early to the Z-ring. Probably stimulates Z-ring formation, perhaps through the cross-linking of FtsZ protofilaments. Its function overlaps with FtsA. This is Cell division protein SepF from Finegoldia magna (strain ATCC 29328 / DSM 20472 / WAL 2508) (Peptostreptococcus magnus).